Reading from the N-terminus, the 292-residue chain is Zinc finger protein SNAI3 (292 aa).

Residues 1 to 20 (MPRSFLVKTHSSHRVPNYRR) form an SNAG domain region. 4 C2H2-type zinc fingers span residues 152–174 (FECF…RQLH), 183–205 (FTCK…IRTH), 209–231 (CTCK…VRTH), and 237–259 (YACS…LQTH). A C2H2-type 5; degenerate zinc finger spans residues 265–287 (YRCRRCTKTFSRMSLLARHEESG).

The protein belongs to the snail C2H2-type zinc-finger protein family.

The protein localises to the nucleus. In terms of biological role, seems to inhibit myoblast differentiation. Transcriptional repressor of E-box-dependent transactivation of downstream myogenic bHLHs genes. Binds preferentially to the canonical E-box sequences 5'-CAGGTG-3' and 5'-CACCTG-3'. In Homo sapiens (Human), this protein is Zinc finger protein SNAI3 (SNAI3).